The chain runs to 257 residues: Caspase-14 (257 aa).

Active-site residues include H93 and C136. Residues 156–167 (DEELGGDEVAVL) constitute a propeptide that is removed on maturation.

Belongs to the peptidase C14A family. Heterodimer of a large and a small subunit, both processed from the precursor; the mature active form is a p17/p10 dimer and the intermediate form a p20/p8 dimer. In terms of processing, maturation by proteolytic processing appears to be a two-step process. The precursor is processed by KLK7 to yield the p20/p8 intermediate form which acts the precursor to yield the p17/p10 mature form. Initially it was reported that cleavage by granzyme B, caspase-8 and -10 generates the two active subunits, however the physiological relevance has not been established. As to expression, embryo, adult liver and less in adult brain and kidney. Expressed in differentiating keratinocytes of embryonic skin (at protein level). Expressed in keratinocytes of adult skin suprabasal layers (at protein level).

It is found in the cytoplasm. The protein localises to the nucleus. Non-apoptotic caspase which is involved in epidermal differentiation. Seems to play a role in keratinocyte differentiation and is required for cornification. Regulates maturation of the epidermis by proteolytically processing filaggrin. In vitro is equally active on the synthetic caspase substrates WEHD-ACF and IETD-AFC. Involved in processing of prosaposin in the epidermis. May be involved in retinal pigment epithelium cell barrier function. The protein is Caspase-14 (Casp14) of Mus musculus (Mouse).